We begin with the raw amino-acid sequence, 377 residues long: NADH dehydrogenase [ubiquinone] 1 alpha subcomplex subunit 9, mitochondrial (377 aa).

A mitochondrion-targeting transit peptide spans 1-35; sequence MAAAVRFQVVRALPMSRPAISAAATSVFCSSSHRQ. Lysine 175 bears the N6-succinyllysine mark. N6-acetyllysine is present on residues lysine 189 and lysine 370.

Belongs to the complex I NDUFA9 subunit family. Complex I is composed of 45 different subunits. This a component of the hydrophobic protein fraction. Interacts with BLOC1S1. Interacts with SLC2A4. Interacts with CLOCK. Interacts with RAB5IF. It depends on FAD as a cofactor. Acetylated on lysine residues. BLOC1S1 is required for acetylation. Acetylated by CLOCK in a circadian manner. In terms of tissue distribution, expressed by the principal cells of the epididymis. Detected in flagella of epididymal sperm (at protein level).

The protein resides in the mitochondrion matrix. Functionally, accessory subunit of the mitochondrial membrane respiratory chain NADH dehydrogenase (Complex I), that is believed not to be involved in catalysis. Complex I functions in the transfer of electrons from NADH to the respiratory chain. The immediate electron acceptor for the enzyme is believed to be ubiquinone. This chain is NADH dehydrogenase [ubiquinone] 1 alpha subcomplex subunit 9, mitochondrial, found in Rattus norvegicus (Rat).